Reading from the N-terminus, the 535-residue chain is UDP-glucuronosyltransferase 1A1 (535 aa).

A signal peptide spans 1–29 (MSVVCRSSCSLLLLPCLLLCVLGPSASHA). N-linked (GlcNAc...) asparagine glycosylation is found at Asn89, Asn297, and Asn435. A helical transmembrane segment spans residues 493–509 (VIGFLLAIVLTVVFIVY).

This sequence belongs to the UDP-glycosyltransferase family. As to quaternary structure, homodimers. Homooligomer. Interacts with UGT1A3, UGT1A4, UGT1A6, UGT1A7, UGT1A8, UGT1A9 and UGT1A10 to form heterodimers.

It localises to the endoplasmic reticulum membrane. The catalysed reaction is glucuronate acceptor + UDP-alpha-D-glucuronate = acceptor beta-D-glucuronoside + UDP + H(+). It carries out the reaction 17beta-estradiol + UDP-alpha-D-glucuronate = 17beta-estradiol 3-O-(beta-D-glucuronate) + UDP + H(+). The enzyme catalyses 2-hydroxyestrone + UDP-alpha-D-glucuronate = 2-hydroxyestrone 3-O-(beta-D-glucuronate) + UDP + H(+). It catalyses the reaction 2-hydroxy-17beta-estradiol + UDP-alpha-D-glucuronate = 2-hydroxy-17beta-estradiol 3-O-(beta-D-glucuronate) + UDP + H(+). The catalysed reaction is 2-methoxy-17beta-estradiol + UDP-alpha-D-glucuronate = 2-methoxy-17beta-estradiol 3-O-(beta-D-glucuronate) + UDP + H(+). It carries out the reaction 17alpha-estradiol + UDP-alpha-D-glucuronate = 17alpha-estradiol 3-O-(beta-D-glucuronate) + UDP + H(+). The enzyme catalyses 16beta,17beta-estriol + UDP-alpha-D-glucuronate = 16beta,17beta-estriol 16-O-(beta-D-glucuronate) + UDP + H(+). It catalyses the reaction losartan + UDP-alpha-D-glucuronate = losartan-2-N-beta-D-glucuronide + UDP. The catalysed reaction is prunetin + UDP-alpha-D-glucuronate = prunetin-4'-O-beta-D-glucuronide + UDP. It carries out the reaction SN-38 + UDP-alpha-D-glucuronate = SN-38 O-beta-D-glucuronide + UDP + H(+). The enzyme catalyses (4Z,15Z)-bilirubin IXalpha + UDP-alpha-D-glucuronate = (4Z,15Z)-bilirubin IXalpha C12-beta-D-glucuronoside + UDP. It catalyses the reaction (4Z,15Z)-bilirubin IXalpha + UDP-alpha-D-glucuronate = (4Z,15Z)-bilirubin IXalpha C8-beta-D-glucuronoside + UDP. The catalysed reaction is (4Z,15Z)-bilirubin IXalpha C8-beta-D-glucuronoside + UDP-alpha-D-glucuronate = (4Z,15Z)-bilirubin IXalpha C8,C12-beta-D-bisglucuronoside + UDP. It carries out the reaction (4Z,15Z)-bilirubin IXalpha C12-beta-D-glucuronoside + UDP-alpha-D-glucuronate = (4Z,15Z)-bilirubin IXalpha C8,C12-beta-D-bisglucuronoside + UDP. The enzyme catalyses 8-iso-prostaglandin F2alpha + UDP-alpha-D-glucuronate = 8-iso-prostaglandin F2alpha-glucuronide + UDP + H(+). It catalyses the reaction (5Z,8Z,11Z,14Z)-eicosatetraenoate + UDP-alpha-D-glucuronate = O-[(5Z),(8Z),(11Z),(14Z)-eicosatetraenoyl]-beta-D-glucuronate + UDP. The catalysed reaction is 15-hydroxy-(5Z,8Z,11Z,13E)-eicosatetraenoate + UDP-alpha-D-glucuronate = 15-O-(beta-D-glucuronosyl)-(5Z,8Z,11Z,14Z)-eicosatetraenoate + UDP + H(+). It carries out the reaction 20-hydroxy-(5Z,8Z,11Z,14Z)-eicosatetraenoate + UDP-alpha-D-glucuronate = 20-O-(beta-D-glucuronosyl)-(5Z,8Z,11Z,14Z)-eicosatetraenoate + UDP + H(+). The enzyme catalyses prostaglandin B1 + UDP-alpha-D-glucuronate = 15-O-(beta-D-glucuronosyl)-prostaglandin B1 + UDP + H(+). It catalyses the reaction (E)-ferulate + UDP-alpha-D-glucuronate = (E)-4-O-(beta-D-glucuronosyl)-ferulate + UDP + H(+). The catalysed reaction is (E)-ferulate + UDP-alpha-D-glucuronate = (E)-ferulic acid beta-D-glucuronate ester + UDP. Functionally, UDP-glucuronosyltransferase (UGT) that catalyzes phase II biotransformation reactions in which lipophilic substrates are conjugated with glucuronic acid to increase the metabolite's water solubility, thereby facilitating excretion into either the urine or bile. Essential for the elimination and detoxification of drugs, xenobiotics and endogenous compounds. Catalyzes the glucuronidation of endogenous estrogen hormones such as estradiol, estrone and estriol. Involved in the glucuronidation of bilirubin, a degradation product occurring in the normal catabolic pathway that breaks down heme in vertebrates. Involved in the glucuronidation of arachidonic acid (AA) and AA-derived eicosanoids including 15-HETE, 20-HETE, PGB1 and F2-isoprostane (8-iso-PGF2alpha). Involved in the glucuronidation of the phytochemical ferulic acid at the phenolic or the carboxylic acid group. Also catalyzes the glucuronidation the isoflavones genistein, daidzein, glycitein, formononetin, biochanin A and prunetin, which are phytoestrogens with anticancer and cardiovascular properties. Involved in the glucuronidation of the AGTR1 angiotensin receptor antagonist losartan, a drug which can inhibit the effect of angiotensin II. Involved in the biotransformation of 7-ethyl-10-hydroxycamptothecin (SN-38), the pharmacologically active metabolite of the anticancer drug irinotecan. This chain is UDP-glucuronosyltransferase 1A1, found in Rattus norvegicus (Rat).